A 912-amino-acid polypeptide reads, in one-letter code: Probable transmembrane GTPase FZO-like, chloroplastic (912 aa).

A chloroplast-targeting transit peptide spans 1–54 (MRTLISHRQCVTSPFLISAASPPFPGRCFKLSSFTPPRHRRFSSLSIRNISHES). The disordered stretch occupies residues 51-71 (SHESADQTSSSRPRTLYPGGY). Residues 55–773 (ADQTSSSRPR…SKRLEQDIRE (719 aa)) are Stromal-facing. Residues 359 to 364 (NSGKST) and Ser-521 each bind GTP. Residues 774 to 794 (VFFVTVGGLGAAGLSASLLTS) traverse the membrane as a helical segment. Residues 795-801 (VLPTTLE) lie on the Chloroplast intermembrane side of the membrane. The helical transmembrane segment at 802–822 (DLLALGLCSAGGYVAIANFPY) threads the bilayer. Over 823 to 912 (RRQAIIGKVN…LHVSRDEMRL (90 aa)) the chain is Stromal. Positions 877–904 (DRLLGIQKELSDIRSKLQLLQVDIDNLH) form a coiled coil.

Belongs to the TRAFAC class dynamin-like GTPase superfamily. Dynamin/Fzo/YdjA family. Mitofusin subfamily.

Its subcellular location is the plastid. It localises to the chloroplast inner membrane. The protein resides in the chloroplast thylakoid membrane. Probable membrane-remodeling GTPase that plays a unique role in the in the determination of thylakoid and chloroplast morphology and regulates organization of the thylakoid network. Not involved in the determination of mitochondrial morphology or ultrastructure. This Arabidopsis thaliana (Mouse-ear cress) protein is Probable transmembrane GTPase FZO-like, chloroplastic.